The following is a 113-amino-acid chain: Gas vesicle protein I2 (113 aa).

The segment at 1-93 (MTPTNRHTHG…TVPEQPTHAT (93 aa)) is disordered. Residues 11 to 22 (QNAQHARRNAQQ) are compositionally biased toward low complexity. Residues 52-63 (EQPTSDTTNPAA) are compositionally biased toward polar residues. Low complexity predominate over residues 69 to 81 (AQRTNAQNAARNA). Polar residues predominate over residues 82–93 (HSTVPEQPTHAT).

It belongs to the gas vesicle GvpI family. GvpF to GvpM interact with each other in vitro, and may form multi-subunit complex(es). Interacts with GvpC and GvpO.

The protein resides in the gas vesicle. Its function is as follows. Proteins GvpF to GvpM might be involved in nucleating gas vesicle formation. A minor component of the gas vesicle. Gas vesicles are hollow, gas filled proteinaceous nanostructures found in several microbial planktonic microorganisms. They allow positioning of halobacteria at the optimal depth for growth in the poorly aerated, shallow brine pools of their habitat. In terms of biological role, expression of 2 c-vac DNA fragments containing 2 divergently transcribed regions (gvpE-gvpF-gvpG-gvpH-gvpI-gvpJ-gvpK-gvpL-gvpM and gvpA-gvpC-gvpN-gvpO) allows H.volcanii to produce gas vesicles. This Halobacterium salinarum (strain ATCC 700922 / JCM 11081 / NRC-1) (Halobacterium halobium) protein is Gas vesicle protein I2.